Reading from the N-terminus, the 157-residue chain is Fimbrial protein Q (157 aa).

Residues 1-6 constitute a propeptide that is removed on maturation; that stretch reads MNAQKG. Phe7 is modified (N-methylphenylalanine). The cysteines at positions 136 and 155 are disulfide-linked.

Belongs to the N-Me-Phe pilin family. The pili are polar flexible filaments of about 5.4 nanometers diameter and 2.5 micrometers average length; they consist of only a single polypeptide chain arranged in a helical configuration of five subunits per turn in the assembled pilus.

Its subcellular location is the fimbrium. The polypeptide is Fimbrial protein Q (tfpQ) (Moraxella bovis).